The following is a 93-amino-acid chain: Large ribosomal subunit protein uL23cz/uL23cy (93 aa).

Belongs to the universal ribosomal protein uL23 family. Part of the 50S ribosomal subunit.

Its subcellular location is the plastid. The protein resides in the chloroplast. Its function is as follows. Binds to 23S rRNA. The chain is Large ribosomal subunit protein uL23cz/uL23cy (rpl23-A) from Platanus occidentalis (Sycamore).